The following is a 211-amino-acid chain: tRNA (guanine-N(7)-)-methyltransferase (211 aa).

Residues Asp40, Glu65, Asn92, and Asp117 each contribute to the S-adenosyl-L-methionine site. Asp117 is an active-site residue. Lys121 serves as a coordination point for substrate. An interaction with RNA region spans residues 123-128 (RHNKRR). Substrate is bound at residue Asp153.

This sequence belongs to the class I-like SAM-binding methyltransferase superfamily. TrmB family.

It carries out the reaction guanosine(46) in tRNA + S-adenosyl-L-methionine = N(7)-methylguanosine(46) in tRNA + S-adenosyl-L-homocysteine. Its pathway is tRNA modification; N(7)-methylguanine-tRNA biosynthesis. Its function is as follows. Catalyzes the formation of N(7)-methylguanine at position 46 (m7G46) in tRNA. This Synechocystis sp. (strain ATCC 27184 / PCC 6803 / Kazusa) protein is tRNA (guanine-N(7)-)-methyltransferase.